Reading from the N-terminus, the 65-residue chain is Large ribosomal subunit protein bL35 (65 aa).

The protein belongs to the bacterial ribosomal protein bL35 family.

This Geobacter sp. (strain M21) protein is Large ribosomal subunit protein bL35.